Consider the following 321-residue polypeptide: Gap junction delta-2 protein (321 aa).

Residues 1–19 lie on the Cytoplasmic side of the membrane; it reads MGEWTILERLLEAAVQQHS. Residues 20 to 42 traverse the membrane as a helical segment; the sequence is TMIGRILLTVVVIFRILIVAIVG. The Extracellular segment spans residues 43 to 75; sequence ETVYDDEQTMFVCNTLQPGCNQACYDRAFPISH. Residues 76-98 traverse the membrane as a helical segment; sequence IRYWVFQIIMVCTPSLCFITYSV. Residues 99 to 197 are Cytoplasmic-facing; sequence HQSAKQRERR…KLRRQEGISR (99 aa). The segment at 118–141 is disordered; the sequence is RDPPESIGGPGGTGGGGSGGGKRE. Residues 125–137 show a composition bias toward gly residues; it reads GGPGGTGGGGSGG. The chain crosses the membrane as a helical span at residues 198–220; it reads FYIIQVVFRNALEIGFLVGQYFL. At 221–252 the chain is on the extracellular side; the sequence is YGFSVPGLYECNRYPCIKEVECYVSRPTEKTV. A helical transmembrane segment spans residues 253–275; the sequence is FLVFMFAVSGICVVLNLAELNHL. At 276–321 the chain is on the cytoplasmic side; the sequence is GWRKIKLAVRGAQAKRKSIYEIRNKDLPRVSVPNFGRTQSSDSAYV.

It belongs to the connexin family. Delta-type subfamily. A connexon is composed of a hexamer of connexins. As to expression, highly expressed in neurons.

It localises to the cell membrane. It is found in the cell junction. The protein localises to the gap junction. One gap junction consists of a cluster of closely packed pairs of transmembrane channels, the connexons, through which materials of low MW diffuse from one cell to a neighboring cell. This chain is Gap junction delta-2 protein (GJD2), found in Homo sapiens (Human).